The primary structure comprises 576 residues: Proline--tRNA ligase (576 aa).

The protein belongs to the class-II aminoacyl-tRNA synthetase family. ProS type 1 subfamily. In terms of assembly, homodimer.

Its subcellular location is the cytoplasm. The enzyme catalyses tRNA(Pro) + L-proline + ATP = L-prolyl-tRNA(Pro) + AMP + diphosphate. Its function is as follows. Catalyzes the attachment of proline to tRNA(Pro) in a two-step reaction: proline is first activated by ATP to form Pro-AMP and then transferred to the acceptor end of tRNA(Pro). As ProRS can inadvertently accommodate and process non-cognate amino acids such as alanine and cysteine, to avoid such errors it has two additional distinct editing activities against alanine. One activity is designated as 'pretransfer' editing and involves the tRNA(Pro)-independent hydrolysis of activated Ala-AMP. The other activity is designated 'posttransfer' editing and involves deacylation of mischarged Ala-tRNA(Pro). The misacylated Cys-tRNA(Pro) is not edited by ProRS. The chain is Proline--tRNA ligase from Leptospira interrogans serogroup Icterohaemorrhagiae serovar copenhageni (strain Fiocruz L1-130).